The chain runs to 86 residues: Probable weak neurotoxin NNAM2I (86 aa).

A signal peptide spans 1–21 (MKTLPLTLVVVTIVCLDLGYT). 5 cysteine pairs are disulfide-bonded: C24–C45, C27–C32, C38–C63, C67–C78, and C79–C84.

Belongs to the three-finger toxin family. Ancestral subfamily. Orphan group II sub-subfamily. As to expression, expressed by the venom gland.

It is found in the secreted. In terms of biological role, binds with low affinity to muscular (alpha-1-beta-1-delta-epsilon/CHRNA1-CHRNB1-CHRND-CHRNE) and very low affinity to neuronal (alpha-7/CHRNA7) nicotinic acetylcholine receptor (nAChR). The chain is Probable weak neurotoxin NNAM2I from Naja atra (Chinese cobra).